A 144-amino-acid chain; its full sequence is Putative pre-16S rRNA nuclease (144 aa).

The protein belongs to the YqgF nuclease family.

It is found in the cytoplasm. Functionally, could be a nuclease involved in processing of the 5'-end of pre-16S rRNA. The chain is Putative pre-16S rRNA nuclease from Oleidesulfovibrio alaskensis (strain ATCC BAA-1058 / DSM 17464 / G20) (Desulfovibrio alaskensis).